The following is an 85-amino-acid chain: SCOCO-like protein 1 (85 aa).

Residues M1–V20 show a composition bias toward polar residues. A disordered region spans residues M1 to M34. Residue S2 is modified to N-acetylserine. A Phosphoserine modification is found at S10. Over residues L22 to M34 the composition is skewed to basic and acidic residues.

This sequence belongs to the SLO1 family. As to quaternary structure, interacts with ARL3.

The polypeptide is SCOCO-like protein 1 (SLO1) (Saccharomyces cerevisiae (strain ATCC 204508 / S288c) (Baker's yeast)).